The sequence spans 349 residues: 3-dehydroquinate synthase (349 aa).

Residues 63-68 (DGEEYK), 97-101 (GVIGD), 121-122 (TT), K134, K143, and 161-164 (FLTT) contribute to the NAD(+) site. Residues E176, H235, and H252 each coordinate Zn(2+).

It belongs to the sugar phosphate cyclases superfamily. Dehydroquinate synthase family. The cofactor is Co(2+). Zn(2+) is required as a cofactor. It depends on NAD(+) as a cofactor.

It localises to the cytoplasm. The enzyme catalyses 7-phospho-2-dehydro-3-deoxy-D-arabino-heptonate = 3-dehydroquinate + phosphate. Its pathway is metabolic intermediate biosynthesis; chorismate biosynthesis; chorismate from D-erythrose 4-phosphate and phosphoenolpyruvate: step 2/7. Its function is as follows. Catalyzes the conversion of 3-deoxy-D-arabino-heptulosonate 7-phosphate (DAHP) to dehydroquinate (DHQ). In Sulfurimonas denitrificans (strain ATCC 33889 / DSM 1251) (Thiomicrospira denitrificans (strain ATCC 33889 / DSM 1251)), this protein is 3-dehydroquinate synthase.